An 82-amino-acid chain; its full sequence is Protein WFDC11 (82 aa).

The first 21 residues, 1–21 (MKPSWFPCLVFLCMLLLSALG), serve as a signal peptide directing secretion.

The protein localises to the secreted. The sequence is that of Protein WFDC11 (Wfdc11) from Mus musculus (Mouse).